Here is a 221-residue protein sequence, read N- to C-terminus: Mitochondrial cardiolipin hydrolase (221 aa).

The Mitochondrial intermembrane segment spans residues 1 to 4 (MGRS). Residues 1–38 (MGRSSWRLVFAAGAGLALALEALPWLMRWLLAGRRPRR) form a required for mitochondrial localization region. Residues 5–27 (SWRLVFAAGAGLALALEALPWLM) form a helical membrane-spanning segment. The Cytoplasmic portion of the chain corresponds to 28 to 221 (RWLLAGRRPR…SFFPQKHRGH (194 aa)). The segment at 44–75 (PSQVTCTEALLQAPGLPPGPSGCPCSLPHSES) adopts a C3H1-type; atypical zinc-finger fold. The region spanning 148–175 (DLGYMHHKFAIVDKKVLITGSLNWTTQA) is the PLD phosphodiesterase domain. Catalysis depends on residues histidine 153, lysine 155, and aspartate 160.

This sequence belongs to the phospholipase D family. MitoPLD/Zucchini subfamily. In terms of assembly, homodimer. Interacts with MOV10L1. Interacts with MIGA1 and MIGA2; possibly facilitating homodimer formation. Interacts with GK2. Predominantly expressed in testis (at protein level) and in growing ovary. Also expressed in the brain, eye and urinary bladder (at protein level), but its levels were low or undetectable in other organs.

It localises to the mitochondrion outer membrane. The protein resides in the nucleus membrane. The protein localises to the cell membrane. Its subcellular location is the golgi apparatus. The catalysed reaction is a cardiolipin + H2O = a 1,2-diacyl-sn-glycero-3-phospho-(1'-sn-glycerol) + a 1,2-diacyl-sn-glycero-3-phosphate + H(+). Single stranded DNA (ssDNA) hydrolase activity does not depend upon, but is stimulated by the presence of Ca(2+) and Mn(2+). MIGA1 and MIGA2 increase PLD6 self-association affinity and affects the homodimer conformation facilitating its phospholipase activity over the nuclease activity. MYC induces its expression and stimulates its phospholipase activity. Its function is as follows. Presents phospholipase and nuclease activities, depending on the different physiological conditions. Interaction with Mitoguardin (MIGA1 or MIGA2) affects the dimer conformation, facilitating the lipase activity over the nuclease activity. Plays a key role in mitochondrial fusion and fission via its phospholipase activity. In its phospholipase role, it uses the mitochondrial lipid cardiolipin as substrate to generate phosphatidate (PA or 1,2-diacyl-sn-glycero-3-phosphate), a second messenger signaling lipid. Production of PA facilitates Mitofusin-mediated fusion, whereas the cleavage of PA by the Lipin family of phosphatases produces diacylgycerol (DAG) which promotes mitochondrial fission. Both Lipin and DAG regulate mitochondrial dynamics and membrane fusion/fission, important processes for adapting mitochondrial metabolism to changes in cell physiology. Mitochondrial fusion enables cells to cope with the increased nucleotide demand during DNA synthesis. Mitochondrial function and dynamics are closely associated with biological processes such as cell growth, proliferation, and differentiation. Mediator of MYC activity, promotes mitochondrial fusion and activates AMPK which in turn inhibits YAP/TAZ, thereby inducing cell growth and proliferation. The endonuclease activity plays a critical role in PIWI-interacting RNA (piRNA) biogenesis during spermatogenesis. Implicated in spermatogenesis and sperm fertility in testicular germ cells, its single strand-specific nuclease activity is critical for the biogenesis/maturation of PIWI-interacting RNA (piRNA). MOV10L1 selectively binds to piRNA precursors and funnels them to the endonuclease that catalyzes the first cleavage step of piRNA processing to generate piRNA intermediate fragments that are subsequently loaded to Piwi proteins. Cleaves either DNA or RNA substrates with similar affinity, producing a 5' phosphate end, in this way it participates in the processing of primary piRNA transcripts. piRNAs provide essential protection against the activity of mobile genetic elements. piRNA-mediated transposon silencing is thus critical for maintaining genome stability, in particular in germline cells when transposons are mobilized as a consequence of wide-spread genomic demethylation. PA may act as signaling molecule in the recognition/transport of the precursor RNAs of primary piRNAs. Interacts with tesmin in testes, suggesting a role in spermatogenesis via association with its interacting partner. In Mus musculus (Mouse), this protein is Mitochondrial cardiolipin hydrolase (Pld6).